Here is a 256-residue protein sequence, read N- to C-terminus: Ribonuclease HII (256 aa).

In terms of domain architecture, RNase H type-2 spans 72-256 (ALICGIDEVG…TFEPIKSLVN (185 aa)). The a divalent metal cation site is built by aspartate 78, glutamate 79, and aspartate 170.

Belongs to the RNase HII family. It depends on Mn(2+) as a cofactor. Requires Mg(2+) as cofactor.

It is found in the cytoplasm. It catalyses the reaction Endonucleolytic cleavage to 5'-phosphomonoester.. Its function is as follows. Endonuclease that specifically degrades the RNA of RNA-DNA hybrids. The polypeptide is Ribonuclease HII (Staphylococcus saprophyticus subsp. saprophyticus (strain ATCC 15305 / DSM 20229 / NCIMB 8711 / NCTC 7292 / S-41)).